We begin with the raw amino-acid sequence, 61 residues long: Small ribosomal subunit protein uS14 (61 aa).

C24, C27, C40, and C43 together coordinate Zn(2+).

This sequence belongs to the universal ribosomal protein uS14 family. Zinc-binding uS14 subfamily. In terms of assembly, part of the 30S ribosomal subunit. Contacts proteins S3 and S10. The cofactor is Zn(2+).

Binds 16S rRNA, required for the assembly of 30S particles and may also be responsible for determining the conformation of the 16S rRNA at the A site. This chain is Small ribosomal subunit protein uS14, found in Acidothermus cellulolyticus (strain ATCC 43068 / DSM 8971 / 11B).